The following is a 353-amino-acid chain: Tectonin-2 (353 aa).

The Ricin B-type lectin domain maps to 44–93; it reads WIFDNDGYIRLAANHNLVLDVNGGAAKEGNTVLSYPDKKDHAKNQLWVNK. Repeat copies occupy residues 138 to 173, 174 to 210, 211 to 247, 248 to 282, 283 to 318, and 319 to 353. Residues 138 to 353 form a 6 X approximate tandem repeats region; it reads SAWERHEGEL…SAHNIYKALL (216 aa).

This sequence belongs to the tectonin family.

It is found in the cell surface. Its subcellular location is the cytoplasmic vesicle membrane. Probably involved in bacterial recognition. May be a lectin that function as part of a transmembrane signaling complex during phagocytosis. The protein is Tectonin-2 (TECB) of Physarum polycephalum (Slime mold).